A 118-amino-acid polypeptide reads, in one-letter code: Ferredoxin-thioredoxin reductase, catalytic chain (118 aa).

Cys57 is a binding site for [4Fe-4S] cluster. Cys59 (nucleophile) is an active-site residue. Cysteines 59 and 89 form a disulfide. [4Fe-4S] cluster is bound by residues Cys76, Cys78, and Cys87.

Belongs to the ferredoxin thioredoxin reductase beta subunit family. As to quaternary structure, heterodimer of subunit A (variable subunit) and subunit B (catalytic subunit). Heterodimeric FTR forms a complex with ferredoxin and thioredoxin. It depends on [4Fe-4S] cluster as a cofactor.

Its subcellular location is the plastid. It localises to the chloroplast. It carries out the reaction [thioredoxin]-disulfide + 2 reduced [2Fe-2S]-[ferredoxin] + 2 H(+) = [thioredoxin]-dithiol + 2 oxidized [2Fe-2S]-[ferredoxin]. Its function is as follows. Catalytic subunit of the ferredoxin-thioredoxin reductase (FTR), which catalyzes the two-electron reduction of thioredoxins by the electrons provided by reduced ferredoxin. This is Ferredoxin-thioredoxin reductase, catalytic chain (ftrB) from Porphyra purpurea (Red seaweed).